The sequence spans 137 residues: Small ribosomal subunit protein uS9 (137 aa).

A compositionally biased stretch (basic and acidic residues) spans 105–117 (LKIEGHLSRDPRA). Residues 105–137 (LKIEGHLSRDPRAKERRKYGLKKARKAPQFSKR) are disordered. Residues 118–137 (KERRKYGLKKARKAPQFSKR) are compositionally biased toward basic residues.

This sequence belongs to the universal ribosomal protein uS9 family.

This Prochlorococcus marinus (strain MIT 9211) protein is Small ribosomal subunit protein uS9.